The primary structure comprises 118 residues: Eukaryotic translation initiation factor 4E-binding protein 1 (118 aa).

The residue at position 2 (serine 2) is an N-acetylserine. The tract at residues 27-48 (VQLPPGDYSTTPGGTLFSTTPG) is disordered. Polar residues predominate over residues 34 to 48 (YSTTPGGTLFSTTPG). Threonine 37 is modified (phosphothreonine; by MTOR). The residue at position 41 (threonine 41) is a Phosphothreonine. Residue serine 44 is modified to Phosphoserine. The residue at position 46 (threonine 46) is a Phosphothreonine; by MTOR. At threonine 50 the chain carries Phosphothreonine. Residue tyrosine 54 is modified to Phosphotyrosine. Residues 54–60 (YDRKFLM) carry the YXXXXLphi motif motif. Lysine 57 is covalently cross-linked (Glycyl lysine isopeptide (Lys-Gly) (interchain with G-Cter in ubiquitin)). Residues 64–118 (NSPVTKTPPRDLPTIPGVTSPTGDEPPTEARQNHLRSSPEDKPAGGEESQFEMDI) are disordered. At serine 65 the chain carries Phosphoserine; by DYRK2, MAPK1, MAPK3 and MTOR. Threonine 70 is modified (phosphothreonine; by MTOR). Threonine 77 carries the phosphothreonine modification. Phosphoserine is present on residues serine 83 and serine 100. Serine 101 bears the Phosphoserine; by DYRK2 mark. Phosphoserine is present on serine 112. Positions 114–118 (FEMDI) match the TOS motif motif.

The protein belongs to the eIF4E-binding protein family. In terms of assembly, hypophosphorylated EIF4EBP1 competes with EIF4G1/EIF4G3 to interact with EIF4E; insulin stimulated MAP-kinase (MAPK1 and MAPK3) or mTORC1 phosphorylation of EIF4EBP1 causes dissociation of the complex allowing EIF4G1/EIF4G3 to bind and consequent initiation of translation. Interacts (via TOS motif) with RPTOR; promoting phosphorylation by mTORC1. Post-translationally, phosphorylated on serine and threonine residues in response to insulin, EGF and PDGF. Phosphorylation at Thr-37, Thr-46, Ser-65 and Thr-70, corresponding to the hyperphosphorylated form, is regulated by mTORC1 and abolishes binding to EIF4E. Ubiquitinated: when eIF4E levels are low, hypophosphorylated form is ubiquitinated by the BCR(KLHL25) complex, leading to its degradation and serving as a homeostatic mechanism to maintain translation and prevent eIF4E inhibition when eIF4E levels are low. Not ubiquitinated when hyperphosphorylated (at Thr-37, Thr-46, Ser-65 and Thr-70) or associated with eIF4E.

It is found in the cytoplasm. It localises to the nucleus. Repressor of translation initiation that regulates EIF4E activity by preventing its assembly into the eIF4F complex: hypophosphorylated form competes with EIF4G1/EIF4G3 and strongly binds to EIF4E, leading to repress translation. In contrast, hyperphosphorylated form dissociates from EIF4E, allowing interaction between EIF4G1/EIF4G3 and EIF4E, leading to initiation of translation. Mediates the regulation of protein translation by hormones, growth factors and other stimuli that signal through the MAP kinase and mTORC1 pathways. The polypeptide is Eukaryotic translation initiation factor 4E-binding protein 1 (EIF4EBP1) (Bos taurus (Bovine)).